The following is a 239-amino-acid chain: Ribosomal RNA large subunit methyltransferase E (239 aa).

Gly-88, Trp-90, Asp-111, Asp-127, and Asp-151 together coordinate S-adenosyl-L-methionine. The Proton acceptor role is filled by Lys-191.

Belongs to the class I-like SAM-binding methyltransferase superfamily. RNA methyltransferase RlmE family.

The protein localises to the cytoplasm. The enzyme catalyses uridine(2552) in 23S rRNA + S-adenosyl-L-methionine = 2'-O-methyluridine(2552) in 23S rRNA + S-adenosyl-L-homocysteine + H(+). Functionally, specifically methylates the uridine in position 2552 of 23S rRNA at the 2'-O position of the ribose in the fully assembled 50S ribosomal subunit. The chain is Ribosomal RNA large subunit methyltransferase E from Bartonella bacilliformis (strain ATCC 35685 / KC583 / Herrer 020/F12,63).